The primary structure comprises 513 residues: GMP synthase [glutamine-hydrolyzing] (513 aa).

The Glutamine amidotransferase type-1 domain maps to 3-200; it reads SVLVLDFGSQ…LLNIAGITPD (198 aa). Cys-80 acts as the Nucleophile in catalysis. Catalysis depends on residues His-174 and Glu-176. Residues 201-388 form the GMPS ATP-PPase domain; that stretch reads WSSKSFIDHQ…LGIAEDILMR (188 aa). 228–234 provides a ligand contact to ATP; sequence SGGVDST.

Homodimer.

The catalysed reaction is XMP + L-glutamine + ATP + H2O = GMP + L-glutamate + AMP + diphosphate + 2 H(+). Its pathway is purine metabolism; GMP biosynthesis; GMP from XMP (L-Gln route): step 1/1. Catalyzes the synthesis of GMP from XMP. The protein is GMP synthase [glutamine-hydrolyzing] of Chlorobium phaeovibrioides (strain DSM 265 / 1930) (Prosthecochloris vibrioformis (strain DSM 265)).